Reading from the N-terminus, the 136-residue chain is ATP synthase epsilon chain (136 aa).

Belongs to the ATPase epsilon chain family. In terms of assembly, F-type ATPases have 2 components, CF(1) - the catalytic core - and CF(0) - the membrane proton channel. CF(1) has five subunits: alpha(3), beta(3), gamma(1), delta(1), epsilon(1). CF(0) has three main subunits: a, b and c.

It localises to the cellular thylakoid membrane. Produces ATP from ADP in the presence of a proton gradient across the membrane. This chain is ATP synthase epsilon chain (atpC), found in Prochloron didemni.